Consider the following 458-residue polypeptide: ATP synthase subunit beta (458 aa).

148–155 (GGAGVGKT) contributes to the ATP binding site.

This sequence belongs to the ATPase alpha/beta chains family. As to quaternary structure, F-type ATPases have 2 components, CF(1) - the catalytic core - and CF(0) - the membrane proton channel. CF(1) has five subunits: alpha(3), beta(3), gamma(1), delta(1), epsilon(1). CF(0) has three main subunits: a(1), b(2) and c(9-12). The alpha and beta chains form an alternating ring which encloses part of the gamma chain. CF(1) is attached to CF(0) by a central stalk formed by the gamma and epsilon chains, while a peripheral stalk is formed by the delta and b chains.

The protein localises to the cell inner membrane. It catalyses the reaction ATP + H2O + 4 H(+)(in) = ADP + phosphate + 5 H(+)(out). Functionally, produces ATP from ADP in the presence of a proton gradient across the membrane. The catalytic sites are hosted primarily by the beta subunits. The sequence is that of ATP synthase subunit beta from Halorhodospira halophila (strain DSM 244 / SL1) (Ectothiorhodospira halophila (strain DSM 244 / SL1)).